A 290-amino-acid polypeptide reads, in one-letter code: 33 kDa chaperonin (290 aa).

Cystine bridges form between cysteine 236/cysteine 238 and cysteine 269/cysteine 272.

The protein belongs to the HSP33 family. Post-translationally, under oxidizing conditions two disulfide bonds are formed involving the reactive cysteines. Under reducing conditions zinc is bound to the reactive cysteines and the protein is inactive.

It localises to the cytoplasm. Its function is as follows. Redox regulated molecular chaperone. Protects both thermally unfolding and oxidatively damaged proteins from irreversible aggregation. Plays an important role in the bacterial defense system toward oxidative stress. The chain is 33 kDa chaperonin from Brevibacillus brevis (strain 47 / JCM 6285 / NBRC 100599).